We begin with the raw amino-acid sequence, 527 residues long: MMTPIGIRIRKQIPLSYHYSSIQALLSRFTPTPYNPISNSSSSTQTIPTQFHESQCTNPISRPTVFLFDPPPIRFTHTKSFSTDPSSLDFPSNQPPVVSTISSHHNISQPIDAGSSIRKPISLWPGMFNSPVTNALWEARSNMFEKYGEPTADPPSQSELVTKSPAQSRTSILYNLSSDYALREHYRNPWNMIRIGKLLEDLDALAGTIAFKHCTNEDGMSRPLLLVTASVDKMVLKKPISIDTDLSIVGAVTWVGRSSMEIQLQVLQTTHESSDPSDSVSLVANFTFVARDSKTGKSAVINQISPETGEEKLLWREADERNKMRKMKRKIQKDLELEKQYIERLNALLAEGRVFCDLPALADRNSILMKDTCLENSFICQPQQRNIYGRIFGGFLMRRAVELAFSTTYSFAGVVTHFLEVDHVDFLRPVDVGDFLRLKSCVLYTELQNPTEPLINVEVVAHVTRPELRSSEVSNKFYFTFSVGPEAVKDGLLVRNVVPATEEEARRVLERMDAETPHPHSQYENEI.

The transit peptide at 1 to 75 (MMTPIGIRIR…FLFDPPPIRF (75 aa)) directs the protein to the mitochondrion. HotDog ACOT-type domains are found at residues 172–294 (ILYN…RDSK) and 370–487 (KDTC…GPEA).

This sequence belongs to the acyl coenzyme A hydrolase family. Mostly expressed at low levels in glandular trichomes (lupulin glands), and, to a lower extent, in stems, leaves, flowers and cones.

It is found in the mitochondrion. It catalyses the reaction 2-methylpropanoyl-CoA + H2O = 2-methylpropanoate + CoA + H(+). The catalysed reaction is propanoyl-CoA + H2O = propanoate + CoA + H(+). The enzyme catalyses octanoyl-CoA + H2O = octanoate + CoA + H(+). It carries out the reaction butanoyl-CoA + H2O = butanoate + CoA + H(+). It catalyses the reaction 3-methylbutanoyl-CoA + H2O = 3-methylbutanoate + CoA + H(+). The catalysed reaction is 2-methylbutanoyl-CoA + H2O = 2-methylbutanoate + CoA + H(+). Functionally, acyl-CoA thioesterases are a group of enzymes that catalyze the hydrolysis of acyl-CoAs to the free fatty acid and coenzyme A (CoASH), providing the potential to regulate intracellular levels of acyl-CoAs, free fatty acids and CoASH. Active on acyl CoAs with short chains (propanoyl-CoA and butanoyl-CoA), branched short chains (2-methylpropanoyl-CoA, 2-methylbutanoyl-CoA and 3-methylbutanoyl-CoA) and medium chains (octanoyl-CoA). This Humulus lupulus (European hop) protein is Acyl-coenzyme A thioesterase 4, mitochondrial.